Consider the following 842-residue polypeptide: Protein translocase subunit SecA (842 aa).

ATP-binding positions include Gln85, 103-107 (GEGKT), and Asp493. Residues Cys825, Cys827, Cys836, and His837 each coordinate Zn(2+).

The protein belongs to the SecA family. As to quaternary structure, monomer and homodimer. Part of the essential Sec protein translocation apparatus which comprises SecA, SecYEG and auxiliary proteins SecDF. Other proteins may also be involved. It depends on Zn(2+) as a cofactor.

It is found in the cell membrane. The protein resides in the cytoplasm. It catalyses the reaction ATP + H2O + cellular proteinSide 1 = ADP + phosphate + cellular proteinSide 2.. In terms of biological role, part of the Sec protein translocase complex. Interacts with the SecYEG preprotein conducting channel. Has a central role in coupling the hydrolysis of ATP to the transfer of proteins into and across the cell membrane, serving as an ATP-driven molecular motor driving the stepwise translocation of polypeptide chains across the membrane. The protein is Protein translocase subunit SecA of Streptococcus equi subsp. zooepidemicus (strain MGCS10565).